An 879-amino-acid chain; its full sequence is Fanconi anemia core complex-associated protein 100 (879 aa).

As to quaternary structure, belongs to the multisubunit FA complex composed of FANCA, FANCB, FANCC, FANCE, FANCF, FANCG, FANCL/PHF9, FANCM, FAAP24 and FAAP100. Forms a subcomplex with FANCB and FANCL.

The protein resides in the nucleus. Its function is as follows. Plays a role in Fanconi anemia-associated DNA damage response network. Regulates FANCD2 monoubiquitination and the stability of the FA core complex. Induces chromosomal instability as well as hypersensitivity to DNA cross-linking agents, when repressed. This is Fanconi anemia core complex-associated protein 100 from Mus musculus (Mouse).